Here is a 380-residue protein sequence, read N- to C-terminus: MVELLHSIKAHNDKAWSVSVHPTLPIIATASTDKSTKLYKLSTKQKFPLVAELEDTHKRSIRSVAFKPPLGGVDAPKLDFLDLPALAAGSFDSTISVWGIDEPDVEYDIDEVVANQKEILTSPNNEWNLMAIIEGHENEVKAVDWNFQGQYLASCSRDKTVWIWETDPETLEEFECVAVLNDHSQDVKNVSWHPSMNILASSSYDDTIRIYQQDIAGDEWSCVGILNGHEGTVWCSKFESFKSPTADSSILRLVSASDDLSVRIWVAKREEEEDKPELPSSIKHTKEMVWEVESVLPAVHKYPVYSVAWSSLTGKIASAGSDGKIVVYSEAEKGKWVIDSVHEGSHGVHEINCVIWAQLDDENEILVSAGDDGYVNLWNV.

7 WD repeats span residues 10 to 49 (AHND…KFPL), 56 to 108 (THKR…VEYD), 135 to 175 (GHEN…EEFE), 182 to 221 (DHSQ…DEWS), 228 to 275 (GHEG…EEDK), 299 to 338 (VHKY…KWVI), and 346 to 380 (HGVH…LWNV).

This sequence belongs to the WD repeat CIA1 family. As to quaternary structure, interacts with NAR1.

It localises to the cytoplasm. Its subcellular location is the nucleus. Functionally, essential component of the cytosolic iron-sulfur (Fe/S) protein assembly machinery. Required for the maturation of extramitochondrial Fe/S proteins. This is Probable cytosolic iron-sulfur protein assembly protein 1 from Candida dubliniensis (strain CD36 / ATCC MYA-646 / CBS 7987 / NCPF 3949 / NRRL Y-17841) (Yeast).